The primary structure comprises 426 residues: Alpha/beta hydrolase pydG (426 aa).

It belongs to the AB hydrolase superfamily. Homodimer.

It participates in mycotoxin biosynthesis. Alpha/beta hydrolasee; part of the gene cluster that mediates the biosynthesis of pyrrocidines, fungal natural products containing a macrocyclic para-cyclophane connected to a decahydrofluorene ring system that show potent antibiotic activities toward Gram-negative bacteria. Within the pathway, pydG catalyzes the Knoevenagel condensation that affords the 3-pyrrolin-2-one ring, using as substrate the polyketide-tyrosyl acyl thioester product of pydA. The pathway begins with the PKS-NRPS pydA which, with the help of the trans-enoyl reductase pydC, synthesizes the polyketide-tyrosyl acyl thioester product which can be reductively off-loaded by the terminal reductase (R) domain in pydA. The alpha/beta hydrolase pydG is then required to catalyze the subsequent Knoevenagel condensation that affords the 3-pyrrolin-2-one ring, whereas the four proteins pydB, pydE, pydX and pydZ then function synergistically to form the cyclophane. PydB and the membrane-bound pydX and pydZ are lipid-binding proteins that can sequester and mold the pdyG product into the inverse S-shape. Binding of the medium chain reductase pydE to the complex would trigger the cascade oxidative cyclization. PydY is involved in the Diels-Alder cycloaddition that forms the decahydrofluorene core. Additional non-enzymatic hydroxylation yields pyrrocidine A2 which can be further reduced into pyrrocidine B by an endogenous reductase. The protein is Alpha/beta hydrolase pydG of Acremonium sp.